Reading from the N-terminus, the 1181-residue chain is DNA-directed RNA polymerase subunit beta' (1181 aa).

Cys-68, Cys-70, Cys-83, and Cys-86 together coordinate Zn(2+). The Mg(2+) site is built by Asp-457, Asp-459, and Asp-461. Zn(2+) contacts are provided by Cys-802, Cys-876, Cys-883, and Cys-886.

It belongs to the RNA polymerase beta' chain family. The RNAP catalytic core consists of 2 alpha, 1 beta, 1 beta' and 1 omega subunit. When a sigma factor is associated with the core the holoenzyme is formed, which can initiate transcription. Mg(2+) serves as cofactor. The cofactor is Zn(2+).

It carries out the reaction RNA(n) + a ribonucleoside 5'-triphosphate = RNA(n+1) + diphosphate. Its function is as follows. DNA-dependent RNA polymerase catalyzes the transcription of DNA into RNA using the four ribonucleoside triphosphates as substrates. This is DNA-directed RNA polymerase subunit beta' from Syntrophomonas wolfei subsp. wolfei (strain DSM 2245B / Goettingen).